The primary structure comprises 109 residues: Nucleoid-associated protein ASA_2087 (109 aa).

Disordered regions lie at residues 1–23 (MFGK…RMQK) and 87–109 (QSKS…KLPF). The span at 11–23 (MKQAQQMQERMQK) shows a compositional bias: low complexity.

Belongs to the YbaB/EbfC family. In terms of assembly, homodimer.

Its subcellular location is the cytoplasm. It localises to the nucleoid. Its function is as follows. Binds to DNA and alters its conformation. May be involved in regulation of gene expression, nucleoid organization and DNA protection. This chain is Nucleoid-associated protein ASA_2087, found in Aeromonas salmonicida (strain A449).